Consider the following 224-residue polypeptide: MEINEKLLRQIIEDVLSEMQTSDKPVSFRASTAASAPQAAAAQGDSFLTEIGEAKQGQQQDEVIIAVGPAFGLSQTVNIVGIPHKNILREVIAGIEEEGIKARVIRCFKSSDVAFVAVEGNRLSGSGISIGIQSKGTTVIHQQGLPPLSNLELFPQAPLLTLETYRQIGKNAARYAKRESPQPVPTLNDQMARPKYQAKSAILHIKETKYVVTGKNPQELRVAL.

Residues 1–18 (MEINEKLLRQIIEDVLSE) are targets protein to the BMC.

It belongs to the diol/glycerol dehydratase medium subunit family. In terms of assembly, the propanediol dehydratase enzyme is a heterotrimeric complex composed of a large (PduC), a medium (PduD) and a small (PduE) subunit. It depends on adenosylcob(III)alamin as a cofactor.

Its subcellular location is the bacterial microcompartment. The enzyme catalyses propane-1,2-diol = propanal + H2O. The protein operates within polyol metabolism; 1,2-propanediol degradation. Its function is as follows. Part of the PduCDE complex that catalyzes the dehydration of 1,2-propanediol (1,2-PD) to propionaldehyde. This subunit is directly targeted to the bacterial microcompartment (BMC). Expression of a cosmid containing the full 21-gene pdu operon in E.coli allows E.coli to grow on 1,2-propanediol (1,2-PD) with the appearance of BMCs in its cytoplasm. In terms of biological role, the 1,2-PD-specific bacterial microcompartment (BMC) concentrates low levels of 1,2-PD catabolic enzymes, concentrates volatile reaction intermediates thus enhancing pathway flux and keeps the level of toxic, mutagenic propionaldehyde low. This Citrobacter freundii protein is Propanediol dehydratase medium subunit.